Consider the following 569-residue polypeptide: Urease subunit alpha (569 aa).

The 439-residue stretch at 131–569 folds into the Urease domain; that stretch reads GGMDAHIHYI…LPMAQRYFLF (439 aa). Residues H136, H138, and K218 each contribute to the Ni(2+) site. N6-carboxylysine is present on K218. Residue H220 coordinates substrate. Residues H247 and H273 each coordinate Ni(2+). The active-site Proton donor is the H321. Residue D361 coordinates Ni(2+).

It belongs to the metallo-dependent hydrolases superfamily. Urease alpha subunit family. Heterotrimer of UreA (gamma), UreB (beta) and UreC (alpha) subunits. Three heterotrimers associate to form the active enzyme. It depends on Ni cation as a cofactor. In terms of processing, carboxylation allows a single lysine to coordinate two nickel ions.

It localises to the cytoplasm. The catalysed reaction is urea + 2 H2O + H(+) = hydrogencarbonate + 2 NH4(+). The protein operates within nitrogen metabolism; urea degradation; CO(2) and NH(3) from urea (urease route): step 1/1. In Agrobacterium fabrum (strain C58 / ATCC 33970) (Agrobacterium tumefaciens (strain C58)), this protein is Urease subunit alpha.